Here is a 315-residue protein sequence, read N- to C-terminus: Spermidine synthase 1 (315 aa).

The region spanning 25-262 is the PABS domain; the sequence is PGWFSEISPL…GMIGFMLCST (238 aa). Gln56 provides a ligand contact to S-adenosyl 3-(methylsulfanyl)propylamine. Residue Tyr86 coordinates putrescine. Residues Gln87, Asp111, Glu131, 162 to 163, and Asp181 each bind S-adenosyl 3-(methylsulfanyl)propylamine; that span reads DG. Catalysis depends on Asp181, which acts as the Proton acceptor. Residues 181 to 184 and Tyr250 each bind putrescine; that span reads DSSD.

This sequence belongs to the spermidine/spermine synthase family.

It catalyses the reaction S-adenosyl 3-(methylsulfanyl)propylamine + putrescine = S-methyl-5'-thioadenosine + spermidine + H(+). Its pathway is amine and polyamine biosynthesis; spermidine biosynthesis; spermidine from putrescine: step 1/1. The sequence is that of Spermidine synthase 1 from Hyoscyamus niger (Black henbane).